Here is a 295-residue protein sequence, read N- to C-terminus: Bifunctional protein FolD (295 aa).

NADP(+) contacts are provided by residues 166 to 168 (GRS), S191, and I232.

The protein belongs to the tetrahydrofolate dehydrogenase/cyclohydrolase family. Homodimer.

The catalysed reaction is (6R)-5,10-methylene-5,6,7,8-tetrahydrofolate + NADP(+) = (6R)-5,10-methenyltetrahydrofolate + NADPH. It catalyses the reaction (6R)-5,10-methenyltetrahydrofolate + H2O = (6R)-10-formyltetrahydrofolate + H(+). Its pathway is one-carbon metabolism; tetrahydrofolate interconversion. Catalyzes the oxidation of 5,10-methylenetetrahydrofolate to 5,10-methenyltetrahydrofolate and then the hydrolysis of 5,10-methenyltetrahydrofolate to 10-formyltetrahydrofolate. This chain is Bifunctional protein FolD, found in Rhodopseudomonas palustris (strain BisB5).